A 27-amino-acid chain; its full sequence is Urumin (27 aa).

Expressed by the skin glands.

The protein localises to the secreted. In terms of biological role, amphibian peptide that shows viricidal activity against human H1N1 influenza A virus. It specifically targets the conserved stalk region of H1 hemagglutinin, and acts by actively destroying influenza virions. It shows a reduced activity on human H3N2 influenza A virus and no activity against other viruses (HIV, SIV, HSV-II, hepatitis C, Ebola, Zika, and Dengue viruses). In vivo, the peptide also protects mice infected with mouse-adapted influenza virus from lethal influenza infection. The peptide synthesized in D-amino acids is inactive. This is Urumin from Hydrophylax bahuvistara (Wide-spread fungoid frog).